The chain runs to 246 residues: Mediator of RNA polymerase II transcription subunit 6 (246 aa).

Disordered stretches follow at residues 165-186 (MKKK…RSTN) and 207-246 (EALE…ATTK). Composition is skewed to basic and acidic residues over residues 166–184 (KKKE…EERS) and 208–224 (ALEK…KPEE).

Belongs to the Mediator complex subunit 6 family. As to quaternary structure, component of the Mediator complex. Interacts with let-19/mdt-13. Interacts with RNA polymerase II. Interacts with mdt-28.

Its subcellular location is the nucleus. Functionally, component of the Mediator complex, a coactivator involved in the regulated transcription of nearly all RNA polymerase II-dependent genes. Mediator functions as a bridge to convey information from gene-specific regulatory proteins to the basal RNA polymerase II transcription machinery. Mediator is recruited to promoters by direct interactions with regulatory proteins and serves as a scaffold for the assembly of a functional preinitiation complex with RNA polymerase II and the general transcription factors. The sequence is that of Mediator of RNA polymerase II transcription subunit 6 (mdt-6) from Caenorhabditis briggsae.